The following is a 322-amino-acid chain: N-acetyl-gamma-glutamyl-phosphate reductase (322 aa).

The active site involves cysteine 132.

The protein belongs to the NAGSA dehydrogenase family. Type 1 subfamily.

Its subcellular location is the cytoplasm. The enzyme catalyses N-acetyl-L-glutamate 5-semialdehyde + phosphate + NADP(+) = N-acetyl-L-glutamyl 5-phosphate + NADPH + H(+). Its pathway is amino-acid biosynthesis; L-arginine biosynthesis; N(2)-acetyl-L-ornithine from L-glutamate: step 3/4. Its function is as follows. Catalyzes the NADPH-dependent reduction of N-acetyl-5-glutamyl phosphate to yield N-acetyl-L-glutamate 5-semialdehyde. In Bacteroides fragilis (strain ATCC 25285 / DSM 2151 / CCUG 4856 / JCM 11019 / LMG 10263 / NCTC 9343 / Onslow / VPI 2553 / EN-2), this protein is N-acetyl-gamma-glutamyl-phosphate reductase.